The chain runs to 256 residues: Rhamnolipids biosynthesis 3-oxoacyl-[acyl-carrier-protein] reductase (256 aa).

14 to 38 lines the NADP(+) pocket; sequence VTGGSRGIGQMIAQGLLEAGARVFI. S148 contributes to the substrate binding site. Y162 functions as the Proton acceptor in the catalytic mechanism.

It belongs to the short-chain dehydrogenases/reductases (SDR) family.

The catalysed reaction is a (3R)-hydroxyacyl-[ACP] + NADP(+) = a 3-oxoacyl-[ACP] + NADPH + H(+). The protein operates within lipid metabolism; rhamnolipid biosynthesis. Its function is as follows. Required for the synthesis of the beta-hydroxy acid moiety of rhamnolipids. The sequence is that of Rhamnolipids biosynthesis 3-oxoacyl-[acyl-carrier-protein] reductase (rhlG) from Pseudomonas aeruginosa (strain ATCC 15692 / DSM 22644 / CIP 104116 / JCM 14847 / LMG 12228 / 1C / PRS 101 / PAO1).